Here is a 364-residue protein sequence, read N- to C-terminus: Fructose-bisphosphate aldolase B (364 aa).

An N-acetylalanine modification is found at A2. Position 13 is an N6-succinyllysine (K13). Phosphoserine is present on S36. Position 39 is a phosphothreonine (T39). Beta-D-fructose 1,6-bisphosphate is bound at residue R43. S89 carries the phosphoserine modification. T119 bears the Phosphothreonine mark. Residue K121 is modified to N6-succinyllysine. S132 is subject to Phosphoserine. Catalysis depends on E188, which acts as the Proton acceptor. Residue K230 is the Schiff-base intermediate with dihydroxyacetone-P of the active site. Phosphoserine is present on residues S272, S276, S299, and S301. Position 272–274 (272–274) interacts with beta-D-fructose 1,6-bisphosphate; sequence SGG. R304 is a binding site for beta-D-fructose 1,6-bisphosphate. S309 carries the phosphoserine modification. K317 is subject to N6-succinyllysine.

This sequence belongs to the class I fructose-bisphosphate aldolase family. In terms of assembly, homotetramer. Interacts with BBS1, BBS2, BBS4 and BBS7. Forms a ternary complex with G6PD and TP53; this interaction is direct.

It localises to the cytoplasm. The protein resides in the cytosol. The protein localises to the cytoskeleton. Its subcellular location is the microtubule organizing center. It is found in the centrosome. It localises to the centriolar satellite. The enzyme catalyses beta-D-fructose 1,6-bisphosphate = D-glyceraldehyde 3-phosphate + dihydroxyacetone phosphate. The catalysed reaction is beta-D-fructose 1-phosphate = D-glyceraldehyde + dihydroxyacetone phosphate. The protein operates within carbohydrate degradation; glycolysis; D-glyceraldehyde 3-phosphate and glycerone phosphate from D-glucose: step 4/4. Its pathway is carbohydrate biosynthesis; gluconeogenesis. It functions in the pathway carbohydrate metabolism; fructose metabolism. Functionally, catalyzes the aldol cleavage of fructose 1,6-biphosphate to form two triosephosphates dihydroxyacetone phosphate and D-glyceraldehyde 3-phosphate in glycolysis as well as the reverse stereospecific aldol addition reaction in gluconeogenesis. In fructolysis, metabolizes fructose 1-phosphate derived from the phosphorylation of dietary fructose by fructokinase into dihydroxyacetone phosphate and D-glyceraldehyde. Acts as an adapter independently of its enzymatic activity, exerts a tumor suppressor role by stabilizing the ternary complex with G6PD and TP53 to inhibit G6PD activity and keep oxidative pentose phosphate metabolism in check. The protein is Fructose-bisphosphate aldolase B (ALDOB) of Oryctolagus cuniculus (Rabbit).